Here is a 536-residue protein sequence, read N- to C-terminus: Heparanase-like protein 3 (536 aa).

The signal sequence occupies residues 1-24 (MAYRQILAIVLFLCVFQFLDCTVS). Asn-30, Asn-122, Asn-176, and Asn-191 each carry an N-linked (GlcNAc...) asparagine glycan. Residue Glu-202 is the Proton donor of the active site. 2 N-linked (GlcNAc...) asparagine glycosylation sites follow: Asn-265 and Asn-308. Glu-319 serves as the catalytic Nucleophile. N-linked (GlcNAc...) asparagine glycosylation is found at Asn-370, Asn-427, Asn-438, and Asn-510.

The protein belongs to the glycosyl hydrolase 79 family.

It localises to the lysosome membrane. The protein resides in the secreted. Endoglycosidase which is a cell surface and extracellular matrix-degrading enzyme. Cleaves heparan sulfate proteoglycans (HSPGs) into heparan sulfate side chains and core proteoglycans. This Arabidopsis thaliana (Mouse-ear cress) protein is Heparanase-like protein 3.